Consider the following 634-residue polypeptide: Proline and serine-rich protein 3 (634 aa).

Disordered regions lie at residues 1–69, 81–142, 185–242, 368–455, and 472–534; these read MFPK…LIDN, FRQA…TSLA, DASS…ATLK, VPPT…FEGP, and FPDS…TAPK. The span at 15 to 24 shows a compositional bias: polar residues; that stretch reads RTGATRSQRP. 3 stretches are compositionally biased toward low complexity: residues 40–56, 128–140, and 185–202; these read ESWP…STTE, VTGP…SSTS, and DASS…SPSS. Residues 203–215 are compositionally biased toward polar residues; sequence VTFNPDSNKSSNP. Over residues 368–377 the composition is skewed to low complexity; the sequence is VPPTSTSTTP. A compositionally biased stretch (pro residues) spans 378 to 399; sequence APTPTPQVCIPGPPTSAPPPCA. Over residues 436–448 the composition is skewed to polar residues; it reads VSTSSHQKTTVPD. The span at 503-515 shows a compositional bias: basic and acidic residues; the sequence is PESRRGSKTESRK. Ser-588 is subject to Phosphoserine.

Its subcellular location is the cytoplasm. It is found in the cytoskeleton. It localises to the microtubule organizing center. The protein localises to the centrosome. In Mus musculus (Mouse), this protein is Proline and serine-rich protein 3 (Proser3).